Consider the following 302-residue polypeptide: Enoyl-CoA delta isomerase 1, mitochondrial (302 aa).

The N-terminal 41 residues, 1–41, are a transit peptide targeting the mitochondrion; sequence MALVASVRVPARVLLRAGARLPGAALGRTERAAGGGDGARR. An N6-acetyllysine; alternate modification is found at Lys61. Lys61 is modified (N6-succinyllysine; alternate). Lys84 is subject to N6-succinyllysine. Lys89 is subject to N6-acetyllysine. Substrate is bound by residues 106 to 110, Gly153, and Asn177; that span reads AGLDL. Residue Lys283 is modified to N6-acetyllysine; alternate. Position 283 is an N6-succinyllysine; alternate (Lys283). Lys288 bears the N6-succinyllysine mark.

It belongs to the enoyl-CoA hydratase/isomerase family. As to quaternary structure, homotrimer. Expressed in liver (at protein level).

It is found in the mitochondrion matrix. It carries out the reaction a (3Z)-enoyl-CoA = a 4-saturated (2E)-enoyl-CoA. The enzyme catalyses a (3E)-enoyl-CoA = a 4-saturated (2E)-enoyl-CoA. The catalysed reaction is (3Z)-octenoyl-CoA = (2E)-octenoyl-CoA. It catalyses the reaction (2E)-tetradecenoyl-CoA = (3Z)-tetradecenoyl-CoA. It carries out the reaction (3Z)-dodecenoyl-CoA = (2E)-dodecenoyl-CoA. The enzyme catalyses (3Z)-hexenoyl-CoA = (2E)-hexenoyl-CoA. The catalysed reaction is (3Z)-decenoyl-CoA = (2E)-decenoyl-CoA. It functions in the pathway lipid metabolism; fatty acid beta-oxidation. Functionally, key enzyme of fatty acid beta-oxidation. Able to isomerize both 3-cis (3Z) and 3-trans (3E) double bonds into the 2-trans (2E) form in a range of enoyl-CoA species, with a preference for (3Z)-enoyl-CoAs over (3E)-enoyl-CoAs. The catalytic efficiency of this enzyme is not affected by the fatty acyl chain length. In Homo sapiens (Human), this protein is Enoyl-CoA delta isomerase 1, mitochondrial (ECI1).